The primary structure comprises 169 residues: Disulfide bond formation protein B (169 aa).

Topologically, residues 1–14 (MSNDTFYLKREKRF) are cytoplasmic. The chain crosses the membrane as a helical span at residues 15–31 (LVLLGIICLSLIGGALY). Residues 32–49 (MQIALGEAPCPLCILQRY) lie on the Periplasmic side of the membrane. Cys-41 and Cys-44 are disulfide-bonded. A helical transmembrane segment spans residues 50-64 (ALLFIAIFAFIGAAM). Residues 65–71 (NGRRGVT) are Cytoplasmic-facing. A helical transmembrane segment spans residues 72–89 (VFEALVTLSALCGIAAAG). The Periplasmic portion of the chain corresponds to 90 to 144 (RHAWILAHPSDSCGIDILQPIVDGLPLATLFPTGFQVSGFCTTPYPPVLGLSLAQ). Residues Cys-102 and Cys-130 are joined by a disulfide bond. A helical membrane pass occupies residues 145–163 (WALTAFVLTAILVPACIIR). At 164-169 (NRRKPY) the chain is on the cytoplasmic side.

Belongs to the DsbB family.

Its subcellular location is the cell inner membrane. In terms of biological role, required for disulfide bond formation in some periplasmic proteins. Acts by oxidizing the DsbA protein. This is Disulfide bond formation protein B from Pseudomonas syringae pv. tomato (strain ATCC BAA-871 / DC3000).